The primary structure comprises 490 residues: Betaine aldehyde dehydrogenase (490 aa).

K(+) contacts are provided by threonine 26, isoleucine 27, and aspartate 93. An NAD(+)-binding site is contributed by 150 to 152 (GAW). Catalysis depends on lysine 162, which acts as the Charge relay system. An NAD(+)-binding site is contributed by 176-179 (KPSE). Residue valine 180 participates in K(+) binding. NAD(+) is bound at residue 230-233 (GVAS). Leucine 246 contributes to the K(+) binding site. The active-site Proton acceptor is glutamate 252. Residues glycine 254, cysteine 286, and glutamate 387 each contribute to the NAD(+) site. Cysteine 286 (nucleophile) is an active-site residue. Cysteine 286 carries the post-translational modification Cysteine sulfenic acid (-SOH). The K(+) site is built by lysine 457 and glycine 460. The active-site Charge relay system is glutamate 464.

It belongs to the aldehyde dehydrogenase family. In terms of assembly, dimer of dimers. K(+) serves as cofactor.

The catalysed reaction is betaine aldehyde + NAD(+) + H2O = glycine betaine + NADH + 2 H(+). It participates in amine and polyamine biosynthesis; betaine biosynthesis via choline pathway; betaine from betaine aldehyde: step 1/1. In terms of biological role, involved in the biosynthesis of the osmoprotectant glycine betaine. Catalyzes the irreversible oxidation of betaine aldehyde to the corresponding acid. This Shigella flexneri serotype 5b (strain 8401) protein is Betaine aldehyde dehydrogenase.